We begin with the raw amino-acid sequence, 397 residues long: Ubiquitin-like modifier-activating enzyme 5 (397 aa).

ATP-binding residues include Gly-76, Asp-97, Lys-120, Asn-143, and Asn-177. 2 residues coordinate Zn(2+): Cys-219 and Cys-222. The Glycyl thioester intermediate role is filled by Cys-243. Cys-296 and Cys-301 together coordinate Zn(2+). The UFM1-interacting sequence (UIS) motif lies at 327-339 (IVHEDNDWGIELV). Positions 340–370 (SETTEDELKAASGPVPDLPVGITVAYTIPNK) are linker. Positions 382–397 (ESEESLEDLMAKMRNL) match the UFC1-binding sequence (UFC) motif.

This sequence belongs to the ubiquitin-activating E1 family. UBA5 subfamily. In terms of assembly, homodimer; homodimerization is required for UFM1 activation. Interacts (via UIS motif) with UFM1; binds UFM1 via a trans-binding mechanism in which UFM1 interacts with distinct sites in both subunits of the UBA5 homodimer. Interacts (via C-terminus) with UFC1.

It localises to the cytoplasm. It is found in the nucleus. The protein localises to the endoplasmic reticulum membrane. Its subcellular location is the golgi apparatus. In terms of biological role, E1-like enzyme which specifically catalyzes the first step in ufmylation. Activates UFM1 by first adenylating its C-terminal glycine residue with ATP, and thereafter linking this residue to the side chain of a cysteine residue in E1, yielding a UFM1-E1 thioester and free AMP. Activates UFM1 via a trans-binding mechanism, in which UFM1 interacts with distinct sites in both subunits of the UBA5 homodimer. Trans-binding also promotes stabilization of the UBA5 homodimer, and enhances ATP-binding. Transfer of UFM1 from UBA5 to the E2-like enzyme UFC1 also takes place using a trans mechanism. Ufmylation plays a key role in various processes, such as ribosome recycling, response to DNA damage, interferon response or reticulophagy (also called ER-phagy). The polypeptide is Ubiquitin-like modifier-activating enzyme 5 (Gallus gallus (Chicken)).